The sequence spans 523 residues: 2-isopropylmalate synthase (523 aa).

The 263-residue stretch at 5–267 (VIIFDTTLRD…HTAINHQEIW (263 aa)) folds into the Pyruvate carboxyltransferase domain. Residues Asp14, His202, His204, and Asn238 each contribute to the Mn(2+) site. The interval 392–523 (RLDYFSVQSG…QHNENNKETV (132 aa)) is regulatory domain.

The protein belongs to the alpha-IPM synthase/homocitrate synthase family. LeuA type 1 subfamily. In terms of assembly, homodimer. Requires Mn(2+) as cofactor.

It localises to the cytoplasm. It catalyses the reaction 3-methyl-2-oxobutanoate + acetyl-CoA + H2O = (2S)-2-isopropylmalate + CoA + H(+). It functions in the pathway amino-acid biosynthesis; L-leucine biosynthesis; L-leucine from 3-methyl-2-oxobutanoate: step 1/4. Functionally, catalyzes the condensation of the acetyl group of acetyl-CoA with 3-methyl-2-oxobutanoate (2-ketoisovalerate) to form 3-carboxy-3-hydroxy-4-methylpentanoate (2-isopropylmalate). The polypeptide is 2-isopropylmalate synthase (Shigella sonnei (strain Ss046)).